Consider the following 385-residue polypeptide: Probable protein phosphatase 2C 38 (385 aa).

The 312-residue stretch at Val46–Leu357 folds into the PPM-type phosphatase domain. Position 77 is a phosphoserine (Ser77). Residues Asp88, Gly89, Asp289, and Asp348 each contribute to the Mn(2+) site.

The protein belongs to the PP2C family. Interacts with BIK1. Mg(2+) serves as cofactor. Requires Mn(2+) as cofactor. Phosphorylation at Ser-77 induces dissociation of PP2C38 from BIK1.

The protein resides in the cell membrane. The catalysed reaction is O-phospho-L-seryl-[protein] + H2O = L-seryl-[protein] + phosphate. The enzyme catalyses O-phospho-L-threonyl-[protein] + H2O = L-threonyl-[protein] + phosphate. Functionally, may dephosphorylate and repress plasma membrane H(+)-ATPases (PM H(+)-ATPases, e.g. AHA1 and AHA2), thus influencing negatively plant growth and fitness. Involved in pathogen-associated molecular pattern (PAMP)-triggered immunity (PTI) signaling. Negatively regulates immune responses by controlling the phosphorylation and activation status of BIK1, a central rate-limiting kinase in PTI signaling. Impairs the phosphorylation of the NADPH oxidase RBOHD by BIK1. The protein is Probable protein phosphatase 2C 38 of Arabidopsis thaliana (Mouse-ear cress).